The chain runs to 331 residues: D/L-glyceraldehyde reductase (331 aa).

Residue tyrosine 51 is the Proton donor of the active site. Residue histidine 114 coordinates substrate. 213–276 (SAFGNNTKGL…SVTKARIAEN (64 aa)) is an NADP(+) binding site.

The protein belongs to the aldo/keto reductase family.

It carries out the reaction glycerol + NADP(+) = L-glyceraldehyde + NADPH + H(+). The enzyme catalyses glycerol + NADP(+) = D-glyceraldehyde + NADPH + H(+). It participates in carbohydrate acid metabolism. Its function is as follows. Mediates the conversion of L-glyceraldehyde to glycerol in D-galacturonate catabolic process. Also able to reduce D-glyceraldehyde. The chain is D/L-glyceraldehyde reductase (gld1) from Hypocrea jecorina (Trichoderma reesei).